The sequence spans 97 residues: Co-chaperonin GroES (97 aa).

It belongs to the GroES chaperonin family. In terms of assembly, heptamer of 7 subunits arranged in a ring. Interacts with the chaperonin GroEL.

Its subcellular location is the cytoplasm. Together with the chaperonin GroEL, plays an essential role in assisting protein folding. The GroEL-GroES system forms a nano-cage that allows encapsulation of the non-native substrate proteins and provides a physical environment optimized to promote and accelerate protein folding. GroES binds to the apical surface of the GroEL ring, thereby capping the opening of the GroEL channel. The polypeptide is Co-chaperonin GroES (Oleispira antarctica).